The following is a 245-amino-acid chain: Cuticle protein (245 aa).

One can recognise a Chitin-binding type R&amp;R domain in the interval 25–86 (VSYAAAPALV…TGDSKSQQES (62 aa)). A disordered region spans residues 79-100 (DSKSQQESRSGDVVQGSYSVVD). 3 repeat units span residues 92–95 (VQGS), 108–111 (VDYT), and 118–121 (FNAV).

Component of the cuticle of African malaria mosquito. The polypeptide is Cuticle protein (Ccp84Ab) (Anopheles gambiae (African malaria mosquito)).